The sequence spans 206 residues: MFEHYLSLFVKAVFVENMALAFFLGMCTFLAVSKKISSAIGLGIAVVVVLTITVPVNNLILTYLLSEGALTWTGLEGASNIDLSFLGLLSYIGVIAALVQILEMFLDKFVPALYNALGVFLPLITVNCAILGASLFMVERSYDFGESVIYGAGAGVGWALAITALAGIREKLKYSDVPASLQGLGITFITVGLMSLGFMSFSGIQL.

6 helical membrane passes run 12 to 32, 36 to 56, 85 to 105, 118 to 138, 148 to 168, and 184 to 204; these read AVFVENMALAFFLGMCTFLAV, ISSAIGLGIAVVVVLTITVPV, FLGLLSYIGVIAALVQILEMF, GVFLPLITVNCAILGASLFMV, VIYGAGAGVGWALAITALAGI, and LGITFITVGLMSLGFMSFSGI.

Belongs to the NqrDE/RnfAE family. Composed of six subunits; NqrA, NqrB, NqrC, NqrD, NqrE and NqrF.

The protein localises to the cell inner membrane. It catalyses the reaction a ubiquinone + n Na(+)(in) + NADH + H(+) = a ubiquinol + n Na(+)(out) + NAD(+). In terms of biological role, NQR complex catalyzes the reduction of ubiquinone-1 to ubiquinol by two successive reactions, coupled with the transport of Na(+) ions from the cytoplasm to the periplasm. NqrA to NqrE are probably involved in the second step, the conversion of ubisemiquinone to ubiquinol. The chain is Na(+)-translocating NADH-quinone reductase subunit E from Chromohalobacter salexigens (strain ATCC BAA-138 / DSM 3043 / CIP 106854 / NCIMB 13768 / 1H11).